The following is a 1549-amino-acid chain: Structural maintenance of chromosomes protein 4 (1549 aa).

A disordered region spans residues 1 to 78; the sequence is MPPKTSAAPP…LFSLQLPSRP (78 aa). The span at 26–36 shows a compositional bias: basic residues; sequence KPQKKTTKPVN. The segment covering 37–59 has biased composition (basic and acidic residues); sequence RHKEGSKDPEEELQRAVNEKFDG. Residue 121 to 128 coordinates ATP; sequence GPNGSGKS. Positions 326–604 form a coiled coil; the sequence is MKLEQRRRQR…QNSSCSSSNK (279 aa). Composition is skewed to basic and acidic residues over residues 396–407 and 420–444; these read LSDLGTEETRRK and AEAEKEKEVKKRSNLEAAPEKAERK. 2 disordered regions span residues 396 to 444 and 460 to 485; these read LSDL…AERK and KTANEEADKNLDEFEKRSEAPKEEQK. Residues 619 to 734 enclose the SMC hinge domain; the sequence is KSFHGRLGDL…GDSTQEAQRM (116 aa). Coiled-coil stretches lie at residues 786 to 1058 and 1144 to 1182; these read KAAE…KVNR and EKINEISSRDAEEMQMKLKVCEQQVEALKAKVDISSIKA. The span at 1440–1459 shows a compositional bias: polar residues; that stretch reads IQTTRDVTSRPQSKATTSGD. Positions 1440–1549 are disordered; that stretch reads IQTTRDVTSR…AIVDDDDDME (110 aa). Basic and acidic residues predominate over residues 1460 to 1474; that stretch reads GTERPASRSASRPES. Residues 1510–1523 are compositionally biased toward polar residues; it reads TPPSKRSNSASTPK.

This sequence belongs to the SMC family. SMC4 subfamily. Component of the condensin I complex, which contains the mix-1/SMC2 and smc-4/SMC4 heterodimer, and three non SMC subunits that probably regulate the complex: dpy-26, capg-1 and dpy-28. Within the complex, interacts with mix-1, dpy-26, capg-1 and dpy-28. Component of the condensin II complex, which contains the mix-1/SMC2 and smc-4/SMC4 heterodimer, and three non SMC subunits, kle-2, capg-2 and hcp-6 that probably regulate the complex. Within the complex, interacts with mix-1, kle-2, capg-2 and hcp-6. Interacts with smcl-1.

The protein resides in the nucleus. It localises to the chromosome. Functionally, central component of the condensin I complex, a complex required for conversion of interphase chromatin into mitotic-like condense chromosomes. The condensin I complex introduces positive supercoils into relaxed DNA in the presence of type I topoisomerases. Converts nicked DNA into positive knotted forms in the presence of type II topoisomerases. Also a central component of the condensin II complex, a complex that seems to play a role in prophase chromosome condensation. Both the condensin complex I and II play a role in meiotic and mitotic chromosome segregation. Plays a role in robust cytokinesis upon the presence of chromatin obstructions. The polypeptide is Structural maintenance of chromosomes protein 4 (smc-4) (Caenorhabditis elegans).